Consider the following 234-residue polypeptide: Meiotically up-regulated gene 35 protein (234 aa).

Residues 126–156 are compositionally biased toward basic and acidic residues; that stretch reads DSSGDLTSTDKERDVSPVSHSEKPYWDRYDL. Positions 126–176 are disordered; it reads DSSGDLTSTDKERDVSPVSHSEKPYWDRYDLDQPSNQDVEESRNLVQEPKH. Phosphoserine is present on residues Ser-127 and Ser-128. Thr-132 is subject to Phosphothreonine. Position 141 is a phosphoserine (Ser-141).

The protein resides in the cytoplasm. In terms of biological role, has a role in meiosis. This is Meiotically up-regulated gene 35 protein (mug35) from Schizosaccharomyces pombe (strain 972 / ATCC 24843) (Fission yeast).